The following is a 467-amino-acid chain: Transcription factor CRF1 (467 aa).

Positions 1 to 10 are enriched in polar residues; sequence MLLSAPVNST. Disordered stretches follow at residues 1 to 42, 62 to 110, 151 to 170, and 341 to 361; these read MLLS…VVLS, DFES…SSKT, SKSE…TNED, and TYRD…DRKR. Residues 11–23 are compositionally biased toward basic residues; it reads VRRKPHSPNKKKP. Positions 28–42 are enriched in low complexity; sequence TAASFSSSSSTVVLS. Basic and acidic residues predominate over residues 89 to 102; sequence YSREENTNEVEEKT.

In terms of assembly, interacts with FHL1 to form a repressor complex. The formation of the CRF1-FHL1 complex is inhibited by the TOR pathway. Phosphorylated by CDC28 and YAK1.

It is found in the cytoplasm. It localises to the nucleus. Functionally, transcription factor, corepressor with FHL1 of ribosomal protein genes. May be involved in the blocking of the spread of silencing. This Saccharomyces cerevisiae (strain ATCC 204508 / S288c) (Baker's yeast) protein is Transcription factor CRF1 (CRF1).